The primary structure comprises 179 residues: ATP synthase subunit delta (179 aa).

This sequence belongs to the ATPase delta chain family. In terms of assembly, F-type ATPases have 2 components, F(1) - the catalytic core - and F(0) - the membrane proton channel. F(1) has five subunits: alpha(3), beta(3), gamma(1), delta(1), epsilon(1). F(0) has three main subunits: a(1), b(2) and c(10-14). The alpha and beta chains form an alternating ring which encloses part of the gamma chain. F(1) is attached to F(0) by a central stalk formed by the gamma and epsilon chains, while a peripheral stalk is formed by the delta and b chains.

It is found in the cell membrane. Functionally, f(1)F(0) ATP synthase produces ATP from ADP in the presence of a proton or sodium gradient. F-type ATPases consist of two structural domains, F(1) containing the extramembraneous catalytic core and F(0) containing the membrane proton channel, linked together by a central stalk and a peripheral stalk. During catalysis, ATP synthesis in the catalytic domain of F(1) is coupled via a rotary mechanism of the central stalk subunits to proton translocation. In terms of biological role, this protein is part of the stalk that links CF(0) to CF(1). It either transmits conformational changes from CF(0) to CF(1) or is implicated in proton conduction. This is ATP synthase subunit delta from Clostridium beijerinckii (strain ATCC 51743 / NCIMB 8052) (Clostridium acetobutylicum).